A 264-amino-acid polypeptide reads, in one-letter code: Tryptophan synthase alpha chain (264 aa).

Active-site proton acceptor residues include glutamate 49 and aspartate 60.

Belongs to the TrpA family. Tetramer of two alpha and two beta chains.

The catalysed reaction is (1S,2R)-1-C-(indol-3-yl)glycerol 3-phosphate + L-serine = D-glyceraldehyde 3-phosphate + L-tryptophan + H2O. It functions in the pathway amino-acid biosynthesis; L-tryptophan biosynthesis; L-tryptophan from chorismate: step 5/5. Its function is as follows. The alpha subunit is responsible for the aldol cleavage of indoleglycerol phosphate to indole and glyceraldehyde 3-phosphate. This is Tryptophan synthase alpha chain from Picosynechococcus sp. (strain ATCC 27264 / PCC 7002 / PR-6) (Agmenellum quadruplicatum).